A 315-amino-acid polypeptide reads, in one-letter code: Ribosomal protein L11 methyltransferase (315 aa).

4 residues coordinate S-adenosyl-L-methionine: Thr-161, Gly-182, Asp-204, and Asn-248.

This sequence belongs to the methyltransferase superfamily. PrmA family.

Its subcellular location is the cytoplasm. It catalyses the reaction L-lysyl-[protein] + 3 S-adenosyl-L-methionine = N(6),N(6),N(6)-trimethyl-L-lysyl-[protein] + 3 S-adenosyl-L-homocysteine + 3 H(+). Its function is as follows. Methylates ribosomal protein L11. In Shouchella clausii (strain KSM-K16) (Alkalihalobacillus clausii), this protein is Ribosomal protein L11 methyltransferase.